Here is a 485-residue protein sequence, read N- to C-terminus: NADH-quinone oxidoreductase subunit N (485 aa).

Helical transmembrane passes span Leu8–Ile28, Phe35–Val55, Gly71–Ala91, Phe105–Leu125, Ala127–Phe147, Tyr159–Ala179, Leu203–Phe223, Pro235–Met255, Val271–Gln291, Leu297–Gln317, Val326–Leu346, Ala373–Ile393, Trp408–Val430, and Ile455–Ile475.

It belongs to the complex I subunit 2 family. In terms of assembly, NDH-1 is composed of 13 different subunits. Subunits NuoA, H, J, K, L, M, N constitute the membrane sector of the complex.

The protein resides in the cell inner membrane. The catalysed reaction is a quinone + NADH + 5 H(+)(in) = a quinol + NAD(+) + 4 H(+)(out). Its function is as follows. NDH-1 shuttles electrons from NADH, via FMN and iron-sulfur (Fe-S) centers, to quinones in the respiratory chain. The immediate electron acceptor for the enzyme in this species is believed to be ubiquinone. Couples the redox reaction to proton translocation (for every two electrons transferred, four hydrogen ions are translocated across the cytoplasmic membrane), and thus conserves the redox energy in a proton gradient. The protein is NADH-quinone oxidoreductase subunit N of Salmonella gallinarum (strain 287/91 / NCTC 13346).